A 527-amino-acid polypeptide reads, in one-letter code: Cytochrome P450 714B3 (527 aa).

Residues 1–14 (MEVAMAMAVKVLLS) are Lumenal-facing. Residues 15 to 35 (LCCVGACGLAVYLYHILWLVP) traverse the membrane as a helical; Signal-anchor for type III membrane protein segment. Topologically, residues 36-527 (QKVLAKFEDQ…SVCTKRGTAI (492 aa)) are cytoplasmic. Cys464 provides a ligand contact to heme.

Belongs to the cytochrome P450 family. Heme serves as cofactor.

The protein localises to the membrane. May be involved in gibberellin metabolism. This chain is Cytochrome P450 714B3 (CYP714B3), found in Zea mays (Maize).